Consider the following 922-residue polypeptide: Periodic tryptophan protein 2 homolog (922 aa).

WD repeat units follow at residues G12 to I52, Q53 to E92, K94 to N132, T141 to F180, V182 to Q221, G271 to K310, I313 to K353, G356 to T395, E398 to T439, P443 to S485, G486 to E525, Q528 to L567, S590 to K629, and K691 to D731. Residues E893–K922 form a disordered region. A compositionally biased stretch (acidic residues) spans Q900–T911.

The protein belongs to the WD repeat PWP2 family. As to quaternary structure, part of the small subunit (SSU) processome, composed of more than 70 proteins and the RNA chaperone small nucleolar RNA (snoRNA) U3.

It localises to the nucleus. The protein localises to the nucleolus. Its function is as follows. Part of the small subunit (SSU) processome, first precursor of the small eukaryotic ribosomal subunit. During the assembly of the SSU processome in the nucleolus, many ribosome biogenesis factors, an RNA chaperone and ribosomal proteins associate with the nascent pre-rRNA and work in concert to generate RNA folding, modifications, rearrangements and cleavage as well as targeted degradation of pre-ribosomal RNA by the RNA exosome. In Dictyostelium discoideum (Social amoeba), this protein is Periodic tryptophan protein 2 homolog (pwp2).